The primary structure comprises 521 residues: MQAIHENYTDNPSSSITRERQHEDMKGAQFVVQSNLKIMSRSIAALSKISEDVLIEVSEGGLFFKTVNRSKFCVFRFAPEFFNACDVSMINKKAVNICRLSMKSAQRIFKGVAFGEKNFVGCEFRIDPKAERMMVKLQMNYDIERTIHAKLREMGSMLHKPTYNRSGCRNITVVFASTLLPIFVQMKGDIEVTMKVTDDGLTIRNFHSLDGVTMFNMGVEKGAKKVKTETTITCEKLTRHKIQIPVEFSFSIKEFLSIVTFADQLGSEVCMYYDLPGKPLIVSIEAHPNFDIELALATMGSDDEIDLDGGILKETMAQHEEEEDKSTAHSSSSRRKSKAIDTSSSGTQKSKKCSESLSQEETTRSQSLPSRNRFVPEIPVAEQSWRDREVTVYEQREPSPDLQIVEEVMEIDNQPIVTRTIKEEHSVEQAMQDVSIETIPVETPEENIIPVEVEMLEEPEQEDQEIFKIPQPKRRKTAEDDRNRKIRRILMGTETTSKMRMSQQFDKRLGPLVSDTQYESR.

Disordered stretches follow at residues M1 to R20, Q318 to V375, and G492 to R521. 2 stretches are compositionally biased toward polar residues: residues E355–S370 and T493–Q504.

It belongs to the rad9 family. In terms of assembly, putative component of the toroidal 9-1-1 (RAD9-RAD1-HUS1) complex, composed of hpr-9, mrt-2 and hus-1.

Functionally, may be a component of the 9-1-1 cell-cycle checkpoint response complex that plays a major role in DNA repair. This is Cell cycle checkpoint protein hpr-9 from Caenorhabditis elegans.